Consider the following 340-residue polypeptide: uncharacterized protein (340 aa).

2 consecutive transmembrane segments (helical) span residues 162–182 (PLVP…VLAG) and 239–259 (FWIS…IVVP).

It is found in the cell membrane. This is an uncharacterized protein from Mycobacterium bovis (strain ATCC BAA-935 / AF2122/97).